The chain runs to 429 residues: Enolase (429 aa).

Q164 contacts (2R)-2-phosphoglycerate. The active-site Proton donor is the E206. D243, E286, and D313 together coordinate Mg(2+). (2R)-2-phosphoglycerate contacts are provided by K338, R367, S368, and K389. K338 serves as the catalytic Proton acceptor.

It belongs to the enolase family. Homooctamer. Forms a ring-shaped particle. Requires Mg(2+) as cofactor.

The protein resides in the cytoplasm. The protein localises to the secreted. It localises to the cell surface. The enzyme catalyses (2R)-2-phosphoglycerate = phosphoenolpyruvate + H2O. Its pathway is carbohydrate degradation; glycolysis; pyruvate from D-glyceraldehyde 3-phosphate: step 4/5. Its activity is regulated as follows. Inhibited by fluoride and phosphate. Catalyzes the reversible conversion of 2-phosphoglycerate (2-PG) into phosphoenolpyruvate (PEP). It is essential for the degradation of carbohydrates via glycolysis. The polypeptide is Enolase (Thermotoga maritima (strain ATCC 43589 / DSM 3109 / JCM 10099 / NBRC 100826 / MSB8)).